A 469-amino-acid chain; its full sequence is Probable Xaa-Pro aminopeptidase PEPP (469 aa).

Residues aspartate 265, aspartate 276, glutamate 399, and glutamate 439 each contribute to the Mn(2+) site.

It belongs to the peptidase M24B family. The cofactor is Mn(2+).

The catalysed reaction is Release of any N-terminal amino acid, including proline, that is linked to proline, even from a dipeptide or tripeptide.. Catalyzes the removal of a penultimate prolyl residue from the N-termini of peptides. This is Probable Xaa-Pro aminopeptidase PEPP (PEPP) from Coccidioides posadasii (strain C735) (Valley fever fungus).